The primary structure comprises 299 residues: Ribosomal RNA small subunit methyltransferase H (299 aa).

Residues 32–34, Asp-52, Phe-79, Asp-100, and Gln-107 contribute to the S-adenosyl-L-methionine site; that span reads AGH.

The protein belongs to the methyltransferase superfamily. RsmH family.

It localises to the cytoplasm. It carries out the reaction cytidine(1402) in 16S rRNA + S-adenosyl-L-methionine = N(4)-methylcytidine(1402) in 16S rRNA + S-adenosyl-L-homocysteine + H(+). Its function is as follows. Specifically methylates the N4 position of cytidine in position 1402 (C1402) of 16S rRNA. This Mycoplasmopsis pulmonis (strain UAB CTIP) (Mycoplasma pulmonis) protein is Ribosomal RNA small subunit methyltransferase H.